Here is a 776-residue protein sequence, read N- to C-terminus: V-set and immunoglobulin domain-containing protein 10-like 2 (776 aa).

The signal sequence occupies residues 1–28 (MVGLSAHHRPLGCRLLILFCLLHPGASG). 5 consecutive Ig-like domains span residues 32–140 (PTSN…LYLM), 150–234 (PRVQ…AFLD), 242–324 (PVIT…TTVQ), 399–498 (PTLA…LRLE), and 500–592 (PQLT…VLLE). Cystine bridges form between cysteine 56/cysteine 122, cysteine 169/cysteine 217, cysteine 268/cysteine 308, cysteine 435/cysteine 480, and cysteine 521/cysteine 576. The region spanning 608 to 708 (TPPNVTISRL…EVKTPVDPAF (101 aa)) is the Fibronectin type-III domain. 2 N-linked (GlcNAc...) asparagine glycosylation sites follow: asparagine 611 and asparagine 637. The chain crosses the membrane as a helical span at residues 713–733 (AVLGAAGTGVVVALATSLLVF).

The protein localises to the membrane. In Mus musculus (Mouse), this protein is V-set and immunoglobulin domain-containing protein 10-like 2.